The following is a 465-amino-acid chain: UDP-N-acetylmuramoylalanine--D-glutamate ligase (465 aa).

127–133 (GSNGKST) is an ATP binding site.

The protein belongs to the MurCDEF family.

Its subcellular location is the cytoplasm. It carries out the reaction UDP-N-acetyl-alpha-D-muramoyl-L-alanine + D-glutamate + ATP = UDP-N-acetyl-alpha-D-muramoyl-L-alanyl-D-glutamate + ADP + phosphate + H(+). Its pathway is cell wall biogenesis; peptidoglycan biosynthesis. Cell wall formation. Catalyzes the addition of glutamate to the nucleotide precursor UDP-N-acetylmuramoyl-L-alanine (UMA). The protein is UDP-N-acetylmuramoylalanine--D-glutamate ligase of Cereibacter sphaeroides (strain ATCC 17029 / ATH 2.4.9) (Rhodobacter sphaeroides).